We begin with the raw amino-acid sequence, 267 residues long: Beta-lactamase OXA-5 (267 aa).

Residues 1–19 (MKTIAAYLVLVFYASTALS) form the signal peptide. S67 acts as the Acyl-ester intermediate in catalysis. Position 70 is an N6-carboxylysine (K70). Position 205–207 (205–207 (KTG)) interacts with substrate.

This sequence belongs to the class-D beta-lactamase family.

It catalyses the reaction a beta-lactam + H2O = a substituted beta-amino acid. Its activity is regulated as follows. Inhibited by clavulanic acid. Its function is as follows. Hydrolyzes both oxacillin and methicillin. This is Beta-lactamase OXA-5 (bla) from Pseudomonas aeruginosa.